The chain runs to 486 residues: Probable glycine dehydrogenase (decarboxylating) subunit 2 (486 aa).

Residue lysine 269 is modified to N6-(pyridoxal phosphate)lysine.

This sequence belongs to the GcvP family. C-terminal subunit subfamily. The glycine cleavage system is composed of four proteins: P, T, L and H. In this organism, the P 'protein' is a heterodimer of two subunits. Requires pyridoxal 5'-phosphate as cofactor.

It catalyses the reaction N(6)-[(R)-lipoyl]-L-lysyl-[glycine-cleavage complex H protein] + glycine + H(+) = N(6)-[(R)-S(8)-aminomethyldihydrolipoyl]-L-lysyl-[glycine-cleavage complex H protein] + CO2. The glycine cleavage system catalyzes the degradation of glycine. The P protein binds the alpha-amino group of glycine through its pyridoxal phosphate cofactor; CO(2) is released and the remaining methylamine moiety is then transferred to the lipoamide cofactor of the H protein. This is Probable glycine dehydrogenase (decarboxylating) subunit 2 from Chlorobaculum tepidum (strain ATCC 49652 / DSM 12025 / NBRC 103806 / TLS) (Chlorobium tepidum).